The following is a 245-amino-acid chain: Ribosomal RNA small subunit methyltransferase G (245 aa).

S-adenosyl-L-methionine is bound by residues G85, F90, 108–110, 136–137, and R155; these read DST and AE.

The protein belongs to the methyltransferase superfamily. RNA methyltransferase RsmG family.

The protein localises to the cytoplasm. Functionally, specifically methylates the N7 position of a guanine in 16S rRNA. This Nostoc sp. (strain PCC 7120 / SAG 25.82 / UTEX 2576) protein is Ribosomal RNA small subunit methyltransferase G.